Consider the following 259-residue polypeptide: MEMMMTAAPRIAFLASTAEPAQRARQELMARYGDCSIEEADVLCALGGDGFMLRTLHRYGASGKPVYGMKLGSVGFLMNQYHDDLLERLQRAEPAKLRPLQMMAQTESGVSVESLAYNEVSLLRQTHQAAYISIDLNGQTRIDELTGDGVIVATPAGSTAYNYSAHGPILPLGSHTLALTPIAPYRPRRWRGAILKADTEIRFRVLDPYKRPVSVTADSHEIRDVVEVTIRESTEQRVTLLFDPEHNLEERIFSEQFAV.

Aspartate 49 (proton acceptor) is an active-site residue. Residues 49–50 (DG), arginine 54, 118–119 (NE), aspartate 148, alanine 156, 159–164 (TAYNYS), and alanine 183 each bind NAD(+).

This sequence belongs to the NAD kinase family. The cofactor is a divalent metal cation.

The protein resides in the cytoplasm. The enzyme catalyses NAD(+) + ATP = ADP + NADP(+) + H(+). In terms of biological role, involved in the regulation of the intracellular balance of NAD and NADP, and is a key enzyme in the biosynthesis of NADP. Catalyzes specifically the phosphorylation on 2'-hydroxyl of the adenosine moiety of NAD to yield NADP. This chain is NAD kinase, found in Xylella fastidiosa (strain 9a5c).